The primary structure comprises 45 residues: Peroxidase 3 (45 aa).

This sequence belongs to the peroxidase family. Classical plant (class III) peroxidase subfamily. It depends on heme b as a cofactor. The cofactor is Ca(2+).

It is found in the secreted. The catalysed reaction is 2 a phenolic donor + H2O2 = 2 a phenolic radical donor + 2 H2O. Its function is as follows. Removal of H(2)O(2), oxidation of toxic reductants, biosynthesis and degradation of lignin, suberization, auxin catabolism, response to environmental stresses such as wounding, pathogen attack and oxidative stress. These functions might be dependent on each isozyme/isoform in each plant tissue. The chain is Peroxidase 3 from Capsicum annuum (Capsicum pepper).